We begin with the raw amino-acid sequence, 170 residues long: Large ribosomal subunit protein uL11 (170 aa).

It belongs to the universal ribosomal protein uL11 family. Part of the ribosomal stalk of the 50S ribosomal subunit. Interacts with L10 and the large rRNA to form the base of the stalk. L10 forms an elongated spine to which L12 dimers bind in a sequential fashion forming a multimeric L10(L12)X complex.

In terms of biological role, forms part of the ribosomal stalk which helps the ribosome interact with GTP-bound translation factors. The chain is Large ribosomal subunit protein uL11 from Sulfolobus acidocaldarius (strain ATCC 33909 / DSM 639 / JCM 8929 / NBRC 15157 / NCIMB 11770).